The chain runs to 366 residues: D-alanine--D-alanine ligase (366 aa).

The region spanning 150-353 (KRVLRDAGVP…YPALVDRLIV (204 aa)) is the ATP-grasp domain. Position 180 to 235 (180 to 235 (IGQLGLPLFIKPASQGSSVGVSKVTDRAGFAAALALAFRYDAKVLVEQGISGREIE)) interacts with ATP. Positions 307, 320, and 322 each coordinate Mg(2+).

The protein belongs to the D-alanine--D-alanine ligase family. The cofactor is Mg(2+). Requires Mn(2+) as cofactor.

The protein localises to the cytoplasm. The enzyme catalyses 2 D-alanine + ATP = D-alanyl-D-alanine + ADP + phosphate + H(+). The protein operates within cell wall biogenesis; peptidoglycan biosynthesis. Its function is as follows. Cell wall formation. The polypeptide is D-alanine--D-alanine ligase (Sodalis glossinidius (strain morsitans)).